A 153-amino-acid chain; its full sequence is Regulatory protein RecX (153 aa).

Belongs to the RecX family.

It is found in the cytoplasm. Modulates RecA activity. The polypeptide is Regulatory protein RecX (Mannheimia succiniciproducens (strain KCTC 0769BP / MBEL55E)).